We begin with the raw amino-acid sequence, 351 residues long: Transmembrane and coiled-coil domain-containing protein 5B (351 aa).

Residues 17–214 adopt a coiled-coil conformation; sequence EIPKLEITKQ…WRSSIQSAKT (198 aa). Residues 292–312 form a helical membrane-spanning segment; that stretch reads IFVVMIFFRLLGYVLFYLQYI.

It belongs to the TMCO5 family.

It is found in the membrane. The polypeptide is Transmembrane and coiled-coil domain-containing protein 5B (TMCO5B) (Bos taurus (Bovine)).